Reading from the N-terminus, the 322-residue chain is tRNA U34 carboxymethyltransferase (322 aa).

Residues lysine 91, tryptophan 105, lysine 110, glycine 129, methionine 195, tyrosine 199, and arginine 314 each coordinate carboxy-S-adenosyl-L-methionine.

Belongs to the class I-like SAM-binding methyltransferase superfamily. CmoB family. Homotetramer.

The catalysed reaction is carboxy-S-adenosyl-L-methionine + 5-hydroxyuridine(34) in tRNA = 5-carboxymethoxyuridine(34) in tRNA + S-adenosyl-L-homocysteine + H(+). Its function is as follows. Catalyzes carboxymethyl transfer from carboxy-S-adenosyl-L-methionine (Cx-SAM) to 5-hydroxyuridine (ho5U) to form 5-carboxymethoxyuridine (cmo5U) at position 34 in tRNAs. This Ectopseudomonas mendocina (strain ymp) (Pseudomonas mendocina) protein is tRNA U34 carboxymethyltransferase.